The primary structure comprises 159 residues: Nucleotide-binding protein PSPTO_4393 (159 aa).

This sequence belongs to the YajQ family.

In terms of biological role, nucleotide-binding protein. This chain is Nucleotide-binding protein PSPTO_4393, found in Pseudomonas syringae pv. tomato (strain ATCC BAA-871 / DC3000).